Consider the following 415-residue polypeptide: JmjC domain-containing protein C (415 aa).

The interval 97–140 (NEKNNQSNNNNNNNNNNNNNNNNNNNNNNNNNNNNNNNNNNKPK) is disordered. Positions 104 to 137 (NNNNNNNNNNNNNNNNNNNNNNNNNNNNNNNNNN) are enriched in low complexity. The 176-residue stretch at 127 to 302 (NNNNNNNNNN…ELLKSNKLWC (176 aa)) folds into the JmjC domain.

The chain is JmjC domain-containing protein C (jcdC) from Dictyostelium discoideum (Social amoeba).